Reading from the N-terminus, the 290-residue chain is Sodium/potassium-transporting ATPase subunit beta-2 (290 aa).

Over 1 to 39 the chain is Cytoplasmic; sequence MVIQKEKKSCGQVVEEWKEFVWNPRTHQFMGRTGTSWAF. Residues 40–67 form a helical; Signal-anchor for type II membrane protein membrane-spanning segment; the sequence is ILLFYLVFYGFLTAMFSLTMWVMLQTVS. Over 68–290 the chain is Extracellular; the sequence is DHTPKYQDRL…VAFKLRINKT (223 aa). Asparagine 96 and asparagine 118 each carry an N-linked (GlcNAc...) asparagine glycan. A disulfide bond links cysteine 129 and cysteine 150. N-linked (GlcNAc...) asparagine glycosylation is present at asparagine 153. Cysteines 160 and 177 form a disulfide. N-linked (GlcNAc...) asparagine glycosylation is found at asparagine 193, asparagine 197, asparagine 220, and asparagine 238. The segment at 193–290 is immunoglobulin-like; it reads NQSMNVTCVG…VAFKLRINKT (98 aa). Cysteine 200 and cysteine 261 are joined by a disulfide.

The protein belongs to the X(+)/potassium ATPases subunit beta family. As to quaternary structure, the sodium/potassium-transporting ATPase is composed of a catalytic alpha subunit, an auxiliary non-catalytic beta subunit and an additional regulatory subunit. Interacts with isoform 2 of BSG.

The protein resides in the cell membrane. This is the non-catalytic component of the active enzyme, which catalyzes the hydrolysis of ATP coupled with the exchange of Na(+) and K(+) ions across the plasma membrane. The exact function of the beta-2 subunit is not known. Its function is as follows. Mediates cell adhesion of neurons and astrocytes, and promotes neurite outgrowth. In Mus musculus (Mouse), this protein is Sodium/potassium-transporting ATPase subunit beta-2 (Atp1b2).